The chain runs to 551 residues: Arylsulfatase (551 aa).

A signal peptide spans 1 to 20 (MKSAPFLFLLGLLGLVTAQT). The residue at position 21 (glutamine 21) is a Blocked amino end (Gln). Ca(2+) is bound by residues aspartate 60, histidine 61, and cysteine 100. The active-site Nucleophile is the cysteine 100. Cysteine 100 is modified (3-oxoalanine (Cys)). Residue histidine 158 is part of the active site. Residues asparagine 164, asparagine 213, and asparagine 296 are each glycosylated (N-linked (GlcNAc...) asparagine). Ca(2+) contacts are provided by aspartate 308 and histidine 309.

The protein belongs to the sulfatase family. Ca(2+) serves as cofactor. The conversion to 3-oxoalanine (also known as C-formylglycine, FGly), of a serine or cysteine residue in prokaryotes and of a cysteine residue in eukaryotes, is critical for catalytic activity.

It is found in the cytoplasm. The protein localises to the secreted. Its subcellular location is the extracellular space. The protein resides in the extracellular matrix. It catalyses the reaction an aryl sulfate + H2O = a phenol + sulfate + H(+). Its function is as follows. May be a structural component of the extracellular matrices involved in cell movement during morphogenesis. This Hemicentrotus pulcherrimus (Sea urchin) protein is Arylsulfatase.